The primary structure comprises 231 residues: 5'-methylthioadenosine/S-adenosylhomocysteine nucleosidase (231 aa).

The active-site Proton acceptor is the glutamate 12. Substrate contacts are provided by residues glycine 78, isoleucine 153, and methionine 174–glutamate 175. The active-site Proton donor is the aspartate 198.

Belongs to the PNP/UDP phosphorylase family. MtnN subfamily.

It carries out the reaction S-adenosyl-L-homocysteine + H2O = S-(5-deoxy-D-ribos-5-yl)-L-homocysteine + adenine. The enzyme catalyses S-methyl-5'-thioadenosine + H2O = 5-(methylsulfanyl)-D-ribose + adenine. The catalysed reaction is 5'-deoxyadenosine + H2O = 5-deoxy-D-ribose + adenine. It functions in the pathway amino-acid biosynthesis; L-methionine biosynthesis via salvage pathway; S-methyl-5-thio-alpha-D-ribose 1-phosphate from S-methyl-5'-thioadenosine (hydrolase route): step 1/2. Catalyzes the irreversible cleavage of the glycosidic bond in both 5'-methylthioadenosine (MTA) and S-adenosylhomocysteine (SAH/AdoHcy) to adenine and the corresponding thioribose, 5'-methylthioribose and S-ribosylhomocysteine, respectively. Also cleaves 5'-deoxyadenosine, a toxic by-product of radical S-adenosylmethionine (SAM) enzymes, into 5-deoxyribose and adenine. The chain is 5'-methylthioadenosine/S-adenosylhomocysteine nucleosidase from Shewanella sp. (strain W3-18-1).